Consider the following 217-residue polypeptide: Adenylate kinase (217 aa).

10–15 (GAGKGT) is a binding site for ATP. The interval 30 to 59 (STGDMFRAAMKEGTPLGLQAKQYMDRGDLV) is NMP. Residues Thr-31, Arg-36, 57–59 (DLV), 85–88 (GFPR), and Gln-92 contribute to the AMP site. The tract at residues 126–163 (GRRICRNCGATYHLIFHPPAKPGVCDKCGGELYQRADD) is LID. Arg-127 serves as a coordination point for ATP. The Zn(2+) site is built by Cys-130 and Cys-133. 136–137 (TY) provides a ligand contact to ATP. The Zn(2+) site is built by Cys-150 and Cys-153. Residues Arg-160 and Arg-171 each coordinate AMP. Residue Gln-199 participates in ATP binding.

The protein belongs to the adenylate kinase family. In terms of assembly, monomer.

The protein resides in the cytoplasm. The enzyme catalyses AMP + ATP = 2 ADP. It functions in the pathway purine metabolism; AMP biosynthesis via salvage pathway; AMP from ADP: step 1/1. Its function is as follows. Catalyzes the reversible transfer of the terminal phosphate group between ATP and AMP. Plays an important role in cellular energy homeostasis and in adenine nucleotide metabolism. This is Adenylate kinase from Geobacillus stearothermophilus (Bacillus stearothermophilus).